The sequence spans 218 residues: Ribonuclease HII (218 aa).

One can recognise an RNase H type-2 domain in the interval 22-211 (VRIAGVDEAG…VRAALESRFS (190 aa)). The a divalent metal cation site is built by D28, E29, and D119.

The protein belongs to the RNase HII family. Mn(2+) serves as cofactor. Mg(2+) is required as a cofactor.

The protein localises to the cytoplasm. The enzyme catalyses Endonucleolytic cleavage to 5'-phosphomonoester.. Its function is as follows. Endonuclease that specifically degrades the RNA of RNA-DNA hybrids. This chain is Ribonuclease HII, found in Maricaulis maris (strain MCS10) (Caulobacter maris).